The primary structure comprises 634 residues: AAl-toxin cluster-specific transcription factor ALT13 (634 aa).

Residues 30-56 (CENCKRRKVRCSGANPCEQCLKVNVHC) constitute a DNA-binding region (zn(2)-C6 fungal-type). Residues 66-89 (RRSVPNSGADKNNQQGDTDRHNGA) form a disordered region. The span at 69–81 (VPNSGADKNNQQG) shows a compositional bias: polar residues.

It is found in the nucleus. Functionally, transcription factor that regulates the expression of the gene cluster that mediates the biosynthesis of AAL-toxins, sphinganine-analog mycotoxins responsible for Alternaria stem canker on tomato by the tomato pathotype. This chain is AAl-toxin cluster-specific transcription factor ALT13, found in Alternaria alternata (Alternaria rot fungus).